Consider the following 520-residue polypeptide: MSQQVIIFDTTLRDGEQALQASLSVKEKLQIALALERMGVDVMEVGFPVSSPGDFESVRTIAQQMKNSRVCALARCVDKDIDVAAEALRIAEAFRIHVFLATSTLHIESKLKRSFDDVLAMAVHSVKRARNYTDDVEFSCEDAGRTPIDNLCRIVEAAINAGATTINIPDTVGYTTPYQFGGIITDLYQRVPNIDKAIISVHCHDDLGMSVANSITAVQAGARQVEGTINGLGERAGNCSLEEVIMAIKVRENMLGVHTNINHQEIYRTSQLVSKLCNMPIPANKAIVGSNAFAHSSGIHQDGVLKNRENYEIMTPQSIGLKEVQLNLTSRSGRAAVKHRMEEMGYQDKDYNLDSLYDAFLKLADKKGQVFDYDLEALAFINKQQEEPEHYRLDYFSVQSGSSVMATASVKLVCGEEIKSEAATGNGPVDAVYQAINRITDYPIELVKYQLSANGQGKDALGQVDIVVDHKGRRFHGVGLATDIVESSAKALVHVLNNIWRAHQVEIEKQRLQQNNQEMV.

Positions 5-267 (VIIFDTTLRD…HTNINHQEIY (263 aa)) constitute a Pyruvate carboxyltransferase domain. Mn(2+) is bound by residues Asp14, His202, His204, and Asn238. Positions 392-520 (RLDYFSVQSG…RLQQNNQEMV (129 aa)) are regulatory domain.

This sequence belongs to the alpha-IPM synthase/homocitrate synthase family. LeuA type 1 subfamily. In terms of assembly, homodimer. Mn(2+) serves as cofactor.

It localises to the cytoplasm. The catalysed reaction is 3-methyl-2-oxobutanoate + acetyl-CoA + H2O = (2S)-2-isopropylmalate + CoA + H(+). It functions in the pathway amino-acid biosynthesis; L-leucine biosynthesis; L-leucine from 3-methyl-2-oxobutanoate: step 1/4. In terms of biological role, catalyzes the condensation of the acetyl group of acetyl-CoA with 3-methyl-2-oxobutanoate (2-ketoisovalerate) to form 3-carboxy-3-hydroxy-4-methylpentanoate (2-isopropylmalate). The chain is 2-isopropylmalate synthase from Yersinia enterocolitica serotype O:8 / biotype 1B (strain NCTC 13174 / 8081).